The primary structure comprises 601 residues: Elongation factor 4 (601 aa).

Residues Ser6–Lys188 form the tr-type G domain. Residues Asp18–Thr23 and Asn135–Asp138 contribute to the GTP site.

Belongs to the TRAFAC class translation factor GTPase superfamily. Classic translation factor GTPase family. LepA subfamily.

It is found in the cell membrane. It carries out the reaction GTP + H2O = GDP + phosphate + H(+). Its function is as follows. Required for accurate and efficient protein synthesis under certain stress conditions. May act as a fidelity factor of the translation reaction, by catalyzing a one-codon backward translocation of tRNAs on improperly translocated ribosomes. Back-translocation proceeds from a post-translocation (POST) complex to a pre-translocation (PRE) complex, thus giving elongation factor G a second chance to translocate the tRNAs correctly. Binds to ribosomes in a GTP-dependent manner. In Clostridioides difficile (strain 630) (Peptoclostridium difficile), this protein is Elongation factor 4.